We begin with the raw amino-acid sequence, 245 residues long: tRNA pseudouridine synthase A (245 aa).

The active-site Nucleophile is the Asp-52. Tyr-111 provides a ligand contact to substrate.

The protein belongs to the tRNA pseudouridine synthase TruA family. Homodimer.

It carries out the reaction uridine(38/39/40) in tRNA = pseudouridine(38/39/40) in tRNA. In terms of biological role, formation of pseudouridine at positions 38, 39 and 40 in the anticodon stem and loop of transfer RNAs. This chain is tRNA pseudouridine synthase A, found in Rickettsia africae (strain ESF-5).